The primary structure comprises 255 residues: Putative cysteine-rich repeat secretory protein 27 (255 aa).

A signal peptide spans Met-1 to Ser-26. 2 Gnk2-homologous domains span residues Tyr-33 to Ser-135 and Tyr-141 to Phe-252.

The protein belongs to the cysteine-rich repeat secretory protein family.

It localises to the secreted. The polypeptide is Putative cysteine-rich repeat secretory protein 27 (CRRSP27) (Arabidopsis thaliana (Mouse-ear cress)).